We begin with the raw amino-acid sequence, 886 residues long: Translation initiation factor IF-2 (886 aa).

Disordered stretches follow at residues 1–25 (MSETKNPGDHTLSVSPTKTLSLKRP), 50–229 (RRAL…PAEE), and 253–272 (KGAEQKSRGRLTVASATGDE). Residues 50 to 60 (RRALGEPHVLR) show a composition bias toward basic and acidic residues. Residues 63 to 73 (APALDVVAPAP) show a composition bias toward low complexity. Residues 74-83 (QAAPPAPTQQ) are compositionally biased toward pro residues. Low complexity predominate over residues 84-106 (PQPRVASRPQPQQRSSSGVILRS). Residues 107–181 (LTEEEREARS…KRRSESEAKR (75 aa)) are compositionally biased toward basic and acidic residues. Residues 185 to 225 (GGEPAPAGANAAPRKAPALSAAPGSAAPSGQPGPAGAVGAR) show a composition bias toward low complexity. A tr-type G domain is found at 383–553 (SRPPVVTIMG…ALQAELLDLK (171 aa)). A G1 region spans residues 392–399 (GHVDHGKT). 392–399 (GHVDHGKT) is a GTP binding site. Residues 417–421 (GITQH) are G2. The segment at 439-442 (DTPG) is G3. Residues 439–443 (DTPGH) and 493–496 (NKID) contribute to the GTP site. The interval 493–496 (NKID) is G4. The G5 stretch occupies residues 529–531 (SAT).

Belongs to the TRAFAC class translation factor GTPase superfamily. Classic translation factor GTPase family. IF-2 subfamily.

The protein localises to the cytoplasm. One of the essential components for the initiation of protein synthesis. Protects formylmethionyl-tRNA from spontaneous hydrolysis and promotes its binding to the 30S ribosomal subunits. Also involved in the hydrolysis of GTP during the formation of the 70S ribosomal complex. The sequence is that of Translation initiation factor IF-2 from Methylocella silvestris (strain DSM 15510 / CIP 108128 / LMG 27833 / NCIMB 13906 / BL2).